The sequence spans 209 residues: Large ribosomal subunit protein eL13 (209 aa).

The protein belongs to the eukaryotic ribosomal protein eL13 family. As to quaternary structure, component of the 60S large ribosomal subunit (LSU).

The protein resides in the cytoplasm. Component of the ribosome, a large ribonucleoprotein complex responsible for the synthesis of proteins in the cell. The small ribosomal subunit (SSU) binds messenger RNAs (mRNAs) and translates the encoded message by selecting cognate aminoacyl-transfer RNA (tRNA) molecules. The large subunit (LSU) contains the ribosomal catalytic site termed the peptidyl transferase center (PTC), which catalyzes the formation of peptide bonds, thereby polymerizing the amino acids delivered by tRNAs into a polypeptide chain. The nascent polypeptides leave the ribosome through a tunnel in the LSU and interact with protein factors that function in enzymatic processing, targeting, and the membrane insertion of nascent chains at the exit of the ribosomal tunnel. As part of the LSU, it is probably required for its formation and the maturation of rRNAs. This Dictyostelium discoideum (Social amoeba) protein is Large ribosomal subunit protein eL13 (rpl13).